The following is a 227-amino-acid chain: Eukaryotic translation initiation factor NCBP (227 aa).

The span at 1-22 shows a compositional bias: basic and acidic residues; the sequence is MEPAAEKREAEQEELQQQHDEP. The interval 1 to 43 is disordered; the sequence is MEPAAEKREAEQEELQQQHDEPAVPSADDDEAEAEENERRNRE. Over residues 27–36 the composition is skewed to acidic residues; that stretch reads ADDDEAEAEE.

Belongs to the eukaryotic initiation factor 4E family. As to quaternary structure, EIF4F is a multi-subunit complex, the composition of which varies with external and internal environmental conditions. It is composed of at least EIF4A, EIF4E and EIF4G. EIF4E is also known to interact with other partners. In higher plants two isoforms of EIF4F have been identified, named isoform EIF4F and isoform EIF(iso)4F. Isoform EIF4F has subunits p220 and p26, whereas isoform EIF(iso)4F has subunits p82 and p28.

In terms of biological role, recognizes and binds the 7-methylguanosine-containing mRNA cap during an early step in the initiation of protein synthesis and facilitates ribosome binding by inducing the unwinding of the mRNAs secondary structures. This is Eukaryotic translation initiation factor NCBP (NCBP) from Oryza sativa subsp. japonica (Rice).